A 354-amino-acid chain; its full sequence is Carbamoyl phosphate synthase arginine-specific small chain (354 aa).

The CPSase stretch occupies residues 1–163 (MKAYLHVASG…RTIETYGEGG (163 aa)). The L-glutamine site is built by S46, G213, and G215. Positions 165-352 (HLVLVDFGYK…LQTVFKGENV (188 aa)) constitute a Glutamine amidotransferase type-1 domain. Residue C240 is the Nucleophile of the active site. L241, Q244, N282, and Y285 together coordinate L-glutamine. Residues H325 and E327 contribute to the active site.

The protein belongs to the CarA family. As to quaternary structure, composed of two chains; the small (or glutamine) chain promotes the hydrolysis of glutamine to ammonia, which is used by the large (or ammonia) chain to synthesize carbamoyl phosphate. Tetramer of heterodimers (alpha,beta)4.

It carries out the reaction hydrogencarbonate + L-glutamine + 2 ATP + H2O = carbamoyl phosphate + L-glutamate + 2 ADP + phosphate + 2 H(+). The catalysed reaction is L-glutamine + H2O = L-glutamate + NH4(+). It participates in amino-acid biosynthesis; L-arginine biosynthesis; carbamoyl phosphate from bicarbonate: step 1/1. In terms of biological role, small subunit of the glutamine-dependent carbamoyl phosphate synthetase (CPSase). CPSase catalyzes the formation of carbamoyl phosphate from the ammonia moiety of glutamine, carbonate, and phosphate donated by ATP, constituting the first step of the biosynthetic pathway leading to arginine and/or urea. The small subunit (glutamine amidotransferase) binds and cleaves glutamine to supply the large subunit with the substrate ammonia. The protein is Carbamoyl phosphate synthase arginine-specific small chain of Geobacillus stearothermophilus (Bacillus stearothermophilus).